Reading from the N-terminus, the 321-residue chain is Opticin (321 aa).

The signal sequence occupies residues 1 to 19 (MKLLALLSLLILMLQEART). The residue at position 61 (Tyr61) is a Sulfotyrosine. The LRRNT domain occupies 105-142 (LLAAPANHGLPTCLICVCLGSSVYCDDADLENIPPLPQ). LRR repeat units lie at residues 143–164 (TTAY…DFKG), 167–188 (KLKR…ALRL), 191–212 (ALRD…PTSI), 237–258 (KLQF…LPLS), 259–279 (LRSL…AFCD), and 289–309 (PLED…PSAY). The cysteines at positions 278 and 311 are disulfide-linked. Asn301 carries an N-linked (GlcNAc...) asparagine glycan.

It belongs to the small leucine-rich proteoglycan (SLRP) family. SLRP class III subfamily. Homodimer. Post-translationally, O-glycosylated (sialylated oligosaccharides). Sulfated on tyrosine residues. In terms of processing, proteolytically cleaved by MMP1, MMP2, MMP3, MMP7, MMP8, MMP9, ADAMTS4, and ADAMTS5. Proteolytically cleaved by MMP13.

It localises to the secreted. It is found in the extracellular space. Its subcellular location is the extracellular matrix. In terms of biological role, inhibits angiogenesis in the vitreous humor of the eye, and therefore represses neovascularization. Binds collagen fibrils. May be involved in collagen fiber organization via regulation of other members of the small leucine-rich repeat proteoglycan superfamily. In Bos taurus (Bovine), this protein is Opticin (OPTC).